Consider the following 543-residue polypeptide: 2,3-bisphosphoglycerate-independent phosphoglycerate mutase (543 aa).

Mn(2+) contacts are provided by Asp-20 and Ser-73. Ser-73 serves as the catalytic Phosphoserine intermediate. Residues His-134, 166 to 167, Arg-198, Arg-204, 278 to 281, and Lys-360 contribute to the substrate site; these read RD and RGDR. Asp-428, His-432, Asp-469, His-470, and His-488 together coordinate Mn(2+).

It belongs to the BPG-independent phosphoglycerate mutase family. In terms of assembly, monomer. The cofactor is Mn(2+).

It catalyses the reaction (2R)-2-phosphoglycerate = (2R)-3-phosphoglycerate. It participates in carbohydrate degradation; glycolysis; pyruvate from D-glyceraldehyde 3-phosphate: step 3/5. Its function is as follows. Catalyzes the interconversion of 2-phosphoglycerate and 3-phosphoglycerate. The polypeptide is 2,3-bisphosphoglycerate-independent phosphoglycerate mutase (Rhodopirellula baltica (strain DSM 10527 / NCIMB 13988 / SH1)).